Reading from the N-terminus, the 482-residue chain is Putative dipeptidase NECHADRAFT_87110 (482 aa).

Polar residues predominate over residues 1–21 (MADTQTPNLQNTAEGDANTSA). Residues 1 to 24 (MADTQTPNLQNTAEGDANTSAENE) are disordered. Asn-18 is a glycosylation site (N-linked (GlcNAc...) asparagine). A helical transmembrane segment spans residues 41-61 (WLRYPFLVAGIALFLGPFSFF). Zn(2+) contacts are provided by His-90, Asp-92, and Glu-201. A disulfide bridge links Cys-141 with Cys-230. Position 228 (His-228) interacts with substrate. Residues His-272 and His-293 each contribute to the Zn(2+) site. 2 residues coordinate substrate: Arg-304 and Asp-364.

This sequence belongs to the metallo-dependent hydrolases superfamily. Peptidase M19 family. It depends on Zn(2+) as a cofactor.

It localises to the membrane. The enzyme catalyses an L-aminoacyl-L-amino acid + H2O = 2 an L-alpha-amino acid. Its function is as follows. Hydrolyzes a wide range of dipeptides. In Fusarium vanettenii (strain ATCC MYA-4622 / CBS 123669 / FGSC 9596 / NRRL 45880 / 77-13-4) (Fusarium solani subsp. pisi), this protein is Putative dipeptidase NECHADRAFT_87110.